Consider the following 107-residue polypeptide: Putative double-stranded DNA mimic protein YE2228 (107 aa).

This sequence belongs to the putative dsDNA mimic protein family.

Functionally, may act as a double-stranded DNA (dsDNA) mimic. Probably regulates the activity of a dsDNA-binding protein. This Yersinia enterocolitica serotype O:8 / biotype 1B (strain NCTC 13174 / 8081) protein is Putative double-stranded DNA mimic protein YE2228.